Reading from the N-terminus, the 513-residue chain is Trigger factor (513 aa).

Positions 164 to 249 constitute a PPIase FKBP-type domain; that stretch reads GDQIIIDFLG…VKAVKNAGEF (86 aa). Positions 436–513 are disordered; that stretch reads QAAIEAEEGA…KAPAKKKAEG (78 aa). Residues 452-461 are compositionally biased toward basic residues; sequence AKKAPAKKKA. The segment covering 489–498 has biased composition (low complexity); the sequence is ADEAPAAEEA. The segment covering 501 to 513 has biased composition (basic residues); the sequence is AKKKAPAKKKAEG.

The protein belongs to the FKBP-type PPIase family. Tig subfamily.

Its subcellular location is the cytoplasm. The enzyme catalyses [protein]-peptidylproline (omega=180) = [protein]-peptidylproline (omega=0). Involved in protein export. Acts as a chaperone by maintaining the newly synthesized protein in an open conformation. Functions as a peptidyl-prolyl cis-trans isomerase. In Novosphingobium aromaticivorans (strain ATCC 700278 / DSM 12444 / CCUG 56034 / CIP 105152 / NBRC 16084 / F199), this protein is Trigger factor.